We begin with the raw amino-acid sequence, 257 residues long: Sad1-interacting factor 1 (257 aa).

Residues 16–68 (LNKIKQGGASRINQILGQNSDDSQSDVRATASEEAVHSETATPVTPMSSGFME) are disordered. 2 stretches are compositionally biased toward polar residues: residues 26–37 (RINQILGQNSDD) and 54–63 (ETATPVTPMS). Position 35 is a phosphoserine (Ser-35). Ser-132 bears the Phosphoserine mark. Thr-134 carries the phosphothreonine modification. The next 2 membrane-spanning stretches (helical) occupy residues 160 to 180 (LLAI…LLPW) and 231 to 251 (FTQL…CCYF).

Interacts with kms1 and sad1.

The protein resides in the membrane. The polypeptide is Sad1-interacting factor 1 (sif1) (Schizosaccharomyces pombe (strain 972 / ATCC 24843) (Fission yeast)).